Here is a 354-residue protein sequence, read N- to C-terminus: Protein FAM181A (354 aa).

Basic and acidic residues-rich tracts occupy residues 1-14 (MPLE…ERND) and 129-142 (YLKR…RRLL). 3 disordered regions span residues 1 to 35 (MPLE…KQVS), 117 to 160 (LPRG…CKEK), and 172 to 193 (AKEQ…VPMR).

It belongs to the FAM181 family.

The polypeptide is Protein FAM181A (FAM181A) (Homo sapiens (Human)).